Consider the following 531-residue polypeptide: High affinity cysteine transporter (531 aa).

The Cytoplasmic portion of the chain corresponds to 1–54 (MSKVDVKIGADSISSSDEILVPSRLADVTLAFMEENDAAVPEITPEQEKKLKRK). The chain crosses the membrane as a helical span at residues 55–75 (LFLTIFTFVSAINLLLYMDKA). At 76–97 (TLSYDSILGFFEDTGLTQNTYN) the chain is on the lumenal side. A helical transmembrane segment spans residues 98–118 (TVNTLFYVGFAIGQFPGQYLA). The Cytoplasmic portion of the chain corresponds to 119–120 (QK). Residues 121-141 (LPLGKFLGGLLATWTILIFLS) traverse the membrane as a helical segment. Over 142-154 (CTAYNFSGVVALR) the chain is Lumenal. Asn146 carries an N-linked (GlcNAc...) asparagine glycan. The helical transmembrane segment at 155 to 175 (FFLGLTESVVIPILITTMGMF) threads the bilayer. Over 176 to 186 (FDASERAAAQP) the chain is Cytoplasmic. The helical transmembrane segment at 187 to 207 (FFFAACMGSPIPTGFIAYGVL) threads the bilayer. At 208–218 (HITNPSISLWK) the chain is on the lumenal side. Residues 219 to 239 (IFTIIIGGLTFIMTVVVILWF) traverse the membrane as a helical segment. The Cytoplasmic portion of the chain corresponds to 240-285 (PNNPADVKFFSIQERVWIIRRVQASTGSSIEQKVFKKSQFREAMKD). A helical transmembrane segment spans residues 286–306 (YITWLFGLFFLLQQLANNLPY). The Lumenal segment spans residues 307–324 (QQNLLFEGMGGVDALGST). Residues 325–345 (LVSVAGAGFAVVCAFIATLML) traverse the membrane as a helical segment. Residues 346–352 (AKWKNIS) are Cytoplasmic-facing. The helical transmembrane segment at 353 to 373 (ALTAIFWTLPALVGSIAAAAL) threads the bilayer. Residues 374–378 (PWDNK) are Lumenal-facing. The chain crosses the membrane as a helical span at residues 379–399 (IGILANICMAGQIFGIPFIIA). The Cytoplasmic segment spans residues 400 to 413 (LSWASSSASGYTKK). Residues 414–436 (LTRSSVSLFAMGIANIISPQIWR) traverse the membrane as a helical segment. Residues 437–447 (EKDSPRFLPAW) lie on the Lumenal side of the membrane. A helical membrane pass occupies residues 448–468 (IVQIVLSFSLAPAILLLIHFI). Positions 469–498 (LKRRNNQRLKNYDENLQNYLDRIQLIESEN) form a coiled coil. The Cytoplasmic portion of the chain corresponds to 469–531 (LKRRNNQRLK…LENETFIYPL (63 aa)). 2 positions are modified to phosphoserine: Ser500 and Ser501.

Belongs to the major facilitator superfamily. Allantoate permease family.

The protein localises to the cell membrane. The protein resides in the endoplasmic reticulum membrane. Its function is as follows. High affinity cysteine-specific transporter. Major contributor to cysteine transport when cysteine, at low concentrations, is provided as the sole sulfur source. This chain is High affinity cysteine transporter (YCT1), found in Saccharomyces cerevisiae (strain ATCC 204508 / S288c) (Baker's yeast).